A 224-amino-acid chain; its full sequence is ATP-dependent dethiobiotin synthetase BioD (224 aa).

An ATP-binding site is contributed by 14-19 (GIGKTV). Threonine 18 contributes to the Mg(2+) binding site. The active site involves lysine 39. Residue serine 43 coordinates substrate. Residues aspartate 56, 117–120 (EGVG), and 177–178 (NE) each bind ATP. Aspartate 56 and glutamate 117 together coordinate Mg(2+).

Belongs to the dethiobiotin synthetase family. Homodimer. Mg(2+) serves as cofactor.

It is found in the cytoplasm. The catalysed reaction is (7R,8S)-7,8-diammoniononanoate + CO2 + ATP = (4R,5S)-dethiobiotin + ADP + phosphate + 3 H(+). It functions in the pathway cofactor biosynthesis; biotin biosynthesis; biotin from 7,8-diaminononanoate: step 1/2. In terms of biological role, catalyzes a mechanistically unusual reaction, the ATP-dependent insertion of CO2 between the N7 and N8 nitrogen atoms of 7,8-diaminopelargonic acid (DAPA, also called 7,8-diammoniononanoate) to form a ureido ring. This is ATP-dependent dethiobiotin synthetase BioD from Xanthomonas campestris pv. campestris (strain ATCC 33913 / DSM 3586 / NCPPB 528 / LMG 568 / P 25).